A 107-amino-acid polypeptide reads, in one-letter code: Phosphoribosyl-ATP pyrophosphatase (107 aa).

The protein belongs to the PRA-PH family.

It is found in the cytoplasm. It carries out the reaction 1-(5-phospho-beta-D-ribosyl)-ATP + H2O = 1-(5-phospho-beta-D-ribosyl)-5'-AMP + diphosphate + H(+). Its pathway is amino-acid biosynthesis; L-histidine biosynthesis; L-histidine from 5-phospho-alpha-D-ribose 1-diphosphate: step 2/9. In Azoarcus sp. (strain BH72), this protein is Phosphoribosyl-ATP pyrophosphatase.